The chain runs to 816 residues: uncharacterized protein (816 aa).

Disordered stretches follow at residues 1 to 34, 65 to 101, 154 to 406, and 770 to 816; these read MLFN…QQES, RQNN…GYKN, DEKD…ENPE, and RQHK…VMYA. Over residues 18–32 the composition is skewed to low complexity; the sequence is NQSSANTQNQQAHQQ. Residues 83–92 show a composition bias toward polar residues; sequence VSATSAYSKQ. A compositionally biased stretch (low complexity) spans 161 to 223; the sequence is TTTSSSTSTS…STSTTSTSTT (63 aa). Over residues 246-260 the composition is skewed to polar residues; the sequence is ESTSIGKGTADSAQI. Ser286 is modified (phosphoserine). Over residues 292 to 316 the composition is skewed to basic and acidic residues; sequence DEQKEEKSDVKKVNPPSGEEKKEVE. The segment covering 317–326 has biased composition (acidic residues); sequence AEGDAEEETE. A compositionally biased stretch (low complexity) spans 327–342; the sequence is QSSAEESAERTSTPET. 2 positions are modified to phosphoserine: Ser343 and Ser347. Acidic residues predominate over residues 343–353; the sequence is SEPESEEDESP. Positions 380-396 are enriched in low complexity; it reads KSPTSSSTQKSKTAAPS. Composition is skewed to basic and acidic residues over residues 770–792 and 799–816; these read RQHK…DRSQ and PKDD…VMYA. A Phosphothreonine modification is found at Thr809.

Pyrophosphorylated by 5-diphosphoinositol pentakisphosphate (5-IP7). Serine pyrophosphorylation is achieved by Mg(2+)-dependent, but enzyme independent transfer of a beta-phosphate from a inositol pyrophosphate to a pre-phosphorylated serine residue.

This is an uncharacterized protein from Saccharomyces cerevisiae (strain ATCC 204508 / S288c) (Baker's yeast).